The sequence spans 85 residues: Small ribosomal subunit protein bS16 (85 aa).

Belongs to the bacterial ribosomal protein bS16 family.

This chain is Small ribosomal subunit protein bS16, found in Pseudomonas syringae pv. tomato (strain ATCC BAA-871 / DC3000).